Reading from the N-terminus, the 509-residue chain is 2,3-bisphosphoglycerate-independent phosphoglycerate mutase (509 aa).

D11 contributes to the Mn(2+) binding site. Y35 carries the post-translational modification Phosphotyrosine. A Mn(2+)-binding site is contributed by S61. S61 functions as the Phosphoserine intermediate in the catalytic mechanism. Residues H122, 152–153, R184, R190, 260–263, and K335 each bind substrate; these read RD and RPDR. Mn(2+)-binding residues include D402, H406, D443, H444, and H461.

It belongs to the BPG-independent phosphoglycerate mutase family. Monomer. Requires Mn(2+) as cofactor.

The enzyme catalyses (2R)-2-phosphoglycerate = (2R)-3-phosphoglycerate. Its pathway is carbohydrate degradation; glycolysis; pyruvate from D-glyceraldehyde 3-phosphate: step 3/5. Essential for rapid growth and for sporulation. Catalyzes the interconversion of 2-phosphoglycerate and 3-phosphoglycerate. The sequence is that of 2,3-bisphosphoglycerate-independent phosphoglycerate mutase from Bacillus thuringiensis (strain Al Hakam).